A 379-amino-acid polypeptide reads, in one-letter code: tRNA-specific 2-thiouridylase MnmA (379 aa).

ATP is bound by residues 9–16 (AMSGGVDS) and methionine 35. The tract at residues 94 to 96 (NPD) is interaction with target base in tRNA. The active-site Nucleophile is the cysteine 99. Residues cysteine 99 and cysteine 195 are joined by a disulfide bond. Glycine 123 serves as a coordination point for ATP. The segment at 145–147 (KDQ) is interaction with tRNA. Catalysis depends on cysteine 195, which acts as the Cysteine persulfide intermediate. The interaction with tRNA stretch occupies residues 307–308 (RY).

Belongs to the MnmA/TRMU family.

The protein localises to the cytoplasm. The enzyme catalyses S-sulfanyl-L-cysteinyl-[protein] + uridine(34) in tRNA + AH2 + ATP = 2-thiouridine(34) in tRNA + L-cysteinyl-[protein] + A + AMP + diphosphate + H(+). Functionally, catalyzes the 2-thiolation of uridine at the wobble position (U34) of tRNA, leading to the formation of s(2)U34. The chain is tRNA-specific 2-thiouridylase MnmA from Xylella fastidiosa (strain 9a5c).